We begin with the raw amino-acid sequence, 950 residues long: Glycine dehydrogenase (decarboxylating) (950 aa).

At lysine 698 the chain carries N6-(pyridoxal phosphate)lysine.

This sequence belongs to the GcvP family. As to quaternary structure, the glycine cleavage system is composed of four proteins: P, T, L and H. The cofactor is pyridoxal 5'-phosphate.

It catalyses the reaction N(6)-[(R)-lipoyl]-L-lysyl-[glycine-cleavage complex H protein] + glycine + H(+) = N(6)-[(R)-S(8)-aminomethyldihydrolipoyl]-L-lysyl-[glycine-cleavage complex H protein] + CO2. Its function is as follows. The glycine cleavage system catalyzes the degradation of glycine. The P protein binds the alpha-amino group of glycine through its pyridoxal phosphate cofactor; CO(2) is released and the remaining methylamine moiety is then transferred to the lipoamide cofactor of the H protein. The protein is Glycine dehydrogenase (decarboxylating) of Neisseria meningitidis serogroup A / serotype 4A (strain DSM 15465 / Z2491).